The chain runs to 455 residues: MSEEDKAKKLENLLKLLQLNNDDTSKFTQEQKKAMKDHKFWRTQPVKDFDEKVVEEGPIDKPKTPEDISDKPLPLLSSFEWCSIDVDNKKQLEDVFVLLNENYVEDRDAGFRFNYTKEFFNWALKSPGWKKDWHIGVRVKETQKLVAFISAIPVTLGVRGKQVPSVEINFLCVHKQLRSKRLTPVLIKEITRRVNKCDIWHALYTAGIVLPAPVSTCRYTHRPLNWKKLYEVDFTGLPDGHTEEDMIAENALPAKTKTAGLRKLKKEDIDQVFELFKRYQSRFELIQIFTKEEFEHNFIGEESLPLDKQVIFSYVVEQPDGKITDFFSFYSLPFTILNNTKYKDLGIGYLYYYATDADFQFKDRFDPKATKALKTRLCELIYDACILAKNANMDVFNALTSQDNTLFLDDLKFGPGDGFLNFYLFNYRAKPITGGLNPDNSNDIKRRSNVGVVML.

Residue 38–41 participates in tetradecanoyl-CoA binding; that stretch reads HKFW. Residues 168–204 form a myristoyl CoA-binding region; sequence INFLCVHKQLRSKRLTPVLIKEITRRVNKCDIWHALY. The active-site Proton acceptor; via carboxylate is the L455.

The protein belongs to the NMT family. As to quaternary structure, monomer. Post-translationally, the N-terminus is blocked.

The protein resides in the cytoplasm. The enzyme catalyses N-terminal glycyl-[protein] + tetradecanoyl-CoA = N-tetradecanoylglycyl-[protein] + CoA + H(+). Its activity is regulated as follows. Inhibited by diethylpyrocarbonate. Competitively inhibited by S-(2-oxo)pentadecyl-CoA, a non hydrolysable myristoyl-CoA analog, and by SC-58272, a peptidomimetic derived from the N-terminal sequence of a natural substrate. In terms of biological role, adds a myristoyl group to the N-terminal glycine residue of certain cellular proteins. Substrate specificity requires an N-terminal glycine in the nascent polypeptide substrates. Uncharged amino acids are preferred at position 2 while neutral residues are favored at positions 3 and 4. Ser is present at position 5 in almost all known N-myristoyl proteins and Lys is commonly encountered at postion 6. The polypeptide is Glycylpeptide N-tetradecanoyltransferase (NMT1) (Saccharomyces cerevisiae (strain ATCC 204508 / S288c) (Baker's yeast)).